Reading from the N-terminus, the 52-residue chain is uncharacterized protein (52 aa).

This is an uncharacterized protein from Escherichia coli.